A 487-amino-acid polypeptide reads, in one-letter code: NAD(+)--arginine ADP-ribosyltransferase EFV (487 aa).

A coiled-coil region spans residues Ser2–Leu51. The 173-residue stretch at Leu315 to Gly487 folds into the TR mART core domain. NAD(+) contacts are provided by residues Thr346–Arg358 and Arg394–Glu400. Catalysis depends on residues Arg394, Ser415, and Glu463. NAD(+) is bound at residue Glu463.

The protein resides in the secreted. The enzyme catalyses L-arginyl-[protein] + NAD(+) = N(omega)-(ADP-D-ribosyl)-L-arginyl-[protein] + nicotinamide + H(+). Its function is as follows. A probable mono(ADP-ribosyl)transferase, it may ADP-ribosylate Arg in target protein(s). Upon expression in yeast cells causes cell death. The protein is NAD(+)--arginine ADP-ribosyltransferase EFV of Enterococcus faecalis (strain ATCC 700802 / V583).